The sequence spans 85 residues: MNYMVIISLALLVMTGVESVKDGYIADDRNCPYFCGRNAYCDGECKKNRAESGYCQWASKYGNACWCYKLPDDARIMKPGRCNGG.

The signal sequence occupies residues 1-19 (MNYMVIISLALLVMTGVES). The region spanning 21-83 (KDGYIADDRN…ARIMKPGRCN (63 aa)) is the LCN-type CS-alpha/beta domain. Cystine bridges form between Cys-31–Cys-82, Cys-35–Cys-55, Cys-41–Cys-65, and Cys-45–Cys-67.

Belongs to the long (4 C-C) scorpion toxin superfamily. Sodium channel inhibitor family. Alpha subfamily. In terms of tissue distribution, expressed by the venom gland.

Its subcellular location is the secreted. In terms of biological role, alpha toxins bind voltage-independently at site-3 of sodium channels (Nav) and inhibit the inactivation of the activated channels, thereby blocking neuronal transmission. Shows analgesic activity when intraperitoneally injected into mice. In Olivierus martensii (Manchurian scorpion), this protein is BmK AGP-SYPU2.